A 95-amino-acid polypeptide reads, in one-letter code: CRISPR-associated endoribonuclease Cas2 3 (95 aa).

Asp7 contacts Mg(2+).

This sequence belongs to the CRISPR-associated endoribonuclease Cas2 protein family. Homodimer, forms a heterotetramer with a Cas1 homodimer. Mg(2+) serves as cofactor.

Its function is as follows. CRISPR (clustered regularly interspaced short palindromic repeat), is an adaptive immune system that provides protection against mobile genetic elements (viruses, transposable elements and conjugative plasmids). CRISPR clusters contain sequences complementary to antecedent mobile elements and target invading nucleic acids. CRISPR clusters are transcribed and processed into CRISPR RNA (crRNA). Functions as a ssRNA-specific endoribonuclease. Involved in the integration of spacer DNA into the CRISPR cassette. This is CRISPR-associated endoribonuclease Cas2 3 from Rhodospirillum rubrum (strain ATCC 11170 / ATH 1.1.1 / DSM 467 / LMG 4362 / NCIMB 8255 / S1).